We begin with the raw amino-acid sequence, 245 residues long: 1-(5-phosphoribosyl)-5-[(5-phosphoribosylamino)methylideneamino] imidazole-4-carboxamide isomerase (245 aa).

Aspartate 7 (proton acceptor) is an active-site residue. Aspartate 129 serves as the catalytic Proton donor.

Belongs to the HisA/HisF family.

Its subcellular location is the cytoplasm. The catalysed reaction is 1-(5-phospho-beta-D-ribosyl)-5-[(5-phospho-beta-D-ribosylamino)methylideneamino]imidazole-4-carboxamide = 5-[(5-phospho-1-deoxy-D-ribulos-1-ylimino)methylamino]-1-(5-phospho-beta-D-ribosyl)imidazole-4-carboxamide. It participates in amino-acid biosynthesis; L-histidine biosynthesis; L-histidine from 5-phospho-alpha-D-ribose 1-diphosphate: step 4/9. The protein is 1-(5-phosphoribosyl)-5-[(5-phosphoribosylamino)methylideneamino] imidazole-4-carboxamide isomerase of Shewanella frigidimarina (strain NCIMB 400).